The primary structure comprises 204 residues: Cytochrome c biogenesis ATP-binding export protein CcmA (204 aa).

The ABC transporter domain occupies 2–203; sequence LEADNLECVR…PAGTVRELRL (202 aa). 34–41 lines the ATP pocket; the sequence is GRNGAGKT.

Belongs to the ABC transporter superfamily. CcmA exporter (TC 3.A.1.107) family. The complex is composed of two ATP-binding proteins (CcmA) and two transmembrane proteins (CcmB).

It is found in the cell inner membrane. It catalyses the reaction heme b(in) + ATP + H2O = heme b(out) + ADP + phosphate + H(+). Part of the ABC transporter complex CcmAB involved in the biogenesis of c-type cytochromes; once thought to export heme, this seems not to be the case, but its exact role is uncertain. Responsible for energy coupling to the transport system. The polypeptide is Cytochrome c biogenesis ATP-binding export protein CcmA (Dechloromonas aromatica (strain RCB)).